The chain runs to 601 residues: 1-deoxy-D-xylulose-5-phosphate synthase (601 aa).

Residues His-63 and 104–106 (GHS) contribute to the thiamine diphosphate site. Asp-135 provides a ligand contact to Mg(2+). Thiamine diphosphate is bound by residues 136 to 137 (GS), Asn-164, Tyr-272, and Glu-353. Asn-164 contacts Mg(2+).

The protein belongs to the transketolase family. DXPS subfamily. In terms of assembly, homodimer. Requires Mg(2+) as cofactor. The cofactor is thiamine diphosphate.

The enzyme catalyses D-glyceraldehyde 3-phosphate + pyruvate + H(+) = 1-deoxy-D-xylulose 5-phosphate + CO2. It functions in the pathway metabolic intermediate biosynthesis; 1-deoxy-D-xylulose 5-phosphate biosynthesis; 1-deoxy-D-xylulose 5-phosphate from D-glyceraldehyde 3-phosphate and pyruvate: step 1/1. In terms of biological role, catalyzes the acyloin condensation reaction between C atoms 2 and 3 of pyruvate and glyceraldehyde 3-phosphate to yield 1-deoxy-D-xylulose-5-phosphate (DXP). The sequence is that of 1-deoxy-D-xylulose-5-phosphate synthase from Aliarcobacter butzleri (strain RM4018) (Arcobacter butzleri).